Reading from the N-terminus, the 89-residue chain is UPF0297 protein MGAS9429_Spy1808 (89 aa).

The protein belongs to the UPF0297 family.

This chain is UPF0297 protein MGAS9429_Spy1808, found in Streptococcus pyogenes serotype M12 (strain MGAS9429).